A 188-amino-acid chain; its full sequence is FUN14 domain-containing protein 1B (188 aa).

A helical transmembrane segment spans residues 21-41 (VVNIDGNIFSIYVCFFVCFFF). The YXXL signature appears at 52–55 (YEVL). The next 3 helical transmembrane spans lie at 82–102 (YSVA…GFLF), 109–129 (AATA…GGYI), and 167–187 (FFKK…IGLA).

This sequence belongs to the FUN14 family.

The protein localises to the mitochondrion outer membrane. Acts as an activator of hypoxia-induced mitophagy, an important mechanism for mitochondrial quality control. The protein is FUN14 domain-containing protein 1B (fundc1-b) of Xenopus laevis (African clawed frog).